The following is a 254-amino-acid chain: Hydroxypyruvate/pyruvate aldolase (254 aa).

Catalysis depends on His-47, which acts as the Proton acceptor. A divalent metal cation-binding residues include Glu-151 and Asp-177.

The protein belongs to the HpcH/HpaI aldolase family. A divalent metal cation serves as cofactor.

The catalysed reaction is D-glyceraldehyde + pyruvate = 2-dehydro-3-deoxy-L-galactonate. Its function is as follows. Aldolase which can catalyze in vitro the aldolisation reaction between hydroxypyruvate (HPA) or pyruvate (PA) and D-glyceraldehyde (D-GA). The condensation of pyruvate and D-glyceraldehyde produces 2-dehydro-3-deoxy-L-galactonate as the major product. Has weak activity with hydroxypyruvate and D-glyceraldehyde. This chain is Hydroxypyruvate/pyruvate aldolase, found in Chromohalobacter salexigens (strain ATCC BAA-138 / DSM 3043 / CIP 106854 / NCIMB 13768 / 1H11).